The chain runs to 282 residues: Bifunctional protein FolD (282 aa).

NADP(+)-binding positions include 162 to 164 (GRS), S187, and V228.

It belongs to the tetrahydrofolate dehydrogenase/cyclohydrolase family. As to quaternary structure, homodimer.

It catalyses the reaction (6R)-5,10-methylene-5,6,7,8-tetrahydrofolate + NADP(+) = (6R)-5,10-methenyltetrahydrofolate + NADPH. It carries out the reaction (6R)-5,10-methenyltetrahydrofolate + H2O = (6R)-10-formyltetrahydrofolate + H(+). It functions in the pathway one-carbon metabolism; tetrahydrofolate interconversion. Its function is as follows. Catalyzes the oxidation of 5,10-methylenetetrahydrofolate to 5,10-methenyltetrahydrofolate and then the hydrolysis of 5,10-methenyltetrahydrofolate to 10-formyltetrahydrofolate. This chain is Bifunctional protein FolD, found in Thermus thermophilus (strain ATCC 27634 / DSM 579 / HB8).